We begin with the raw amino-acid sequence, 720 residues long: NAD(+) hydrolase ApTIR (720 aa).

Positions 1 to 131 (MRYDAFISYS…AVPPALRGVF (131 aa)) constitute a TIR domain. NAD(+) is bound by residues 10-11 (SH) and Ala-48. The active site involves Glu-84. Residues 192-211 (GALAVVCALLLLVAGTAVAW) traverse the membrane as a helical segment. 2 disordered regions span residues 231–275 (ATAA…AVAE) and 292–359 (EGIA…EEAV). Basic and acidic residues-rich tracts occupy residues 256–268 (EQQR…EEAR) and 307–359 (AEAR…EEAV). Residues 313 to 362 (RGVADAEKAKANRAAAEAERQRKIAADEQRKAHEAAAEAERQREEAVKQQ) adopt a coiled-coil conformation. 7 WD repeats span residues 420–459 (GHTA…APRR), 465–504 (SSTA…APRR), 510–549 (GHTD…APRR), 555–594 (DHTA…APRR), 600–639 (GHTA…APRR), 645–684 (GHTA…APRR), and 690–720 (GHTD…CCGM).

Its subcellular location is the cell membrane. It catalyses the reaction NAD(+) + H2O = ADP-D-ribose + nicotinamide + H(+). In terms of biological role, NAD(+) hydrolase (NADase) that catalyzes cleavage of NAD(+) into ADP-D-ribose (ADPR) and nicotinamide. In Actinoplanes sp. (strain ATCC 31044 / CBS 674.73 / SE50/110), this protein is NAD(+) hydrolase ApTIR.